The sequence spans 228 residues: NAD(P)H-quinone oxidoreductase subunit K, chloroplastic (228 aa).

The [4Fe-4S] cluster site is built by Cys-43, Cys-44, Cys-108, and Cys-139.

Belongs to the complex I 20 kDa subunit family. NDH is composed of at least 16 different subunits, 5 of which are encoded in the nucleus. It depends on [4Fe-4S] cluster as a cofactor.

The protein localises to the plastid. It localises to the chloroplast thylakoid membrane. The catalysed reaction is a plastoquinone + NADH + (n+1) H(+)(in) = a plastoquinol + NAD(+) + n H(+)(out). It catalyses the reaction a plastoquinone + NADPH + (n+1) H(+)(in) = a plastoquinol + NADP(+) + n H(+)(out). Functionally, NDH shuttles electrons from NAD(P)H:plastoquinone, via FMN and iron-sulfur (Fe-S) centers, to quinones in the photosynthetic chain and possibly in a chloroplast respiratory chain. The immediate electron acceptor for the enzyme in this species is believed to be plastoquinone. Couples the redox reaction to proton translocation, and thus conserves the redox energy in a proton gradient. This Ceratophyllum demersum (Rigid hornwort) protein is NAD(P)H-quinone oxidoreductase subunit K, chloroplastic.